The sequence spans 435 residues: Adenylosuccinate synthetase (435 aa).

GTP is bound by residues 11-17 (GDEGKGK) and 39-41 (GHT). Residue aspartate 12 is the Proton acceptor of the active site. Residues aspartate 12 and glycine 39 each contribute to the Mg(2+) site. Residues 12–15 (DEGK), 37–40 (NAGH), threonine 128, arginine 142, glutamine 223, threonine 238, and arginine 302 contribute to the IMP site. Histidine 40 (proton donor) is an active-site residue. 298-304 (SVTGRPR) is a binding site for substrate. GTP contacts are provided by residues arginine 304, 330–332 (KLD), and 412–414 (STG).

The protein belongs to the adenylosuccinate synthetase family. In terms of assembly, homodimer. The cofactor is Mg(2+).

The protein resides in the cytoplasm. The enzyme catalyses IMP + L-aspartate + GTP = N(6)-(1,2-dicarboxyethyl)-AMP + GDP + phosphate + 2 H(+). It participates in purine metabolism; AMP biosynthesis via de novo pathway; AMP from IMP: step 1/2. Plays an important role in the de novo pathway of purine nucleotide biosynthesis. Catalyzes the first committed step in the biosynthesis of AMP from IMP. The polypeptide is Adenylosuccinate synthetase (Coxiella burnetii (strain Dugway 5J108-111)).